Here is a 513-residue protein sequence, read N- to C-terminus: MTLLPGDNSDYDYSALSCTSDASFHPAFLPQRQAIKGAFYRRAQRLRPQDEPRQGCQPEDRRRRIIINVGGIKYSLPWTTLDEFPLTRLGQLKACTNFDDILNVCDDYDVTCNEFFFDRNPGAFGTILTFLRAGKLRLLREMCALSFQEELLYWGIAEDHLDGCCKRRYLQKIEEFAEMVEREEEDDALDSEGRDSEGPAEGEGRLGRCMRRLRDMVERPHSGLPGKVFACLSVLFVTVTAVNLSVSTLPSLREEEEQGHCSQMCHNVFIVESVCVGWFSLEFLLRLIQAPSKFAFLRSPLTLIDLVAILPYYITLLVDGAAAGRRKPGAGNSYLDKVGLVLRVLRALRILYVMRLARHSLGLQTLGLTARRCTREFGLLLLFLCVAIALFAPLLYVIENEMADSPEFTSIPACYWWAVITMTTVGYGDMVPRSTPGQVVALSSILSGILLMAFPVTSIFHTFSRSYLELKQEQERVMFRRAQFLIKTKSQLSVSQDSDILFGSASSDTRDNN.

Topologically, residues 1-224 (MTLLPGDNSD…DMVERPHSGL (224 aa)) are cytoplasmic. A disordered region spans residues 184-204 (EEDDALDSEGRDSEGPAEGEG). The span at 191–204 (SEGRDSEGPAEGEG) shows a compositional bias: basic and acidic residues. A helical transmembrane segment spans residues 225-246 (PGKVFACLSVLFVTVTAVNLSV). Residues 247-267 (STLPSLREEEEQGHCSQMCHN) are Extracellular-facing. The chain crosses the membrane as a helical span at residues 268-289 (VFIVESVCVGWFSLEFLLRLIQ). Residues 290–300 (APSKFAFLRSP) lie on the Cytoplasmic side of the membrane. A helical transmembrane segment spans residues 301-321 (LTLIDLVAILPYYITLLVDGA). Over 322–338 (AAGRRKPGAGNSYLDKV) the chain is Extracellular. A helical; Voltage-sensor membrane pass occupies residues 339–359 (GLVLRVLRALRILYVMRLARH). Residues 360–374 (SLGLQTLGLTARRCT) lie on the Cytoplasmic side of the membrane. Residues 375–396 (REFGLLLLFLCVAIALFAPLLY) traverse the membrane as a helical segment. At 397-411 (VIENEMADSPEFTSI) the chain is on the extracellular side. Residues 412–423 (PACYWWAVITMT) constitute an intramembrane region (helical). A Selectivity filter motif is present at residues 424–429 (TVGYGD). Residues 424–431 (TVGYGDMV) lie within the membrane without spanning it. Residues 432–438 (PRSTPGQ) lie on the Extracellular side of the membrane. Residues 439-467 (VVALSSILSGILLMAFPVTSIFHTFSRSY) form a helical membrane-spanning segment. At 468 to 513 (LELKQEQERVMFRRAQFLIKTKSQLSVSQDSDILFGSASSDTRDNN) the chain is on the cytoplasmic side.

It belongs to the potassium channel family. G (TC 1.A.1.2) subfamily. Kv6.1/KCNG1 sub-subfamily. As to quaternary structure, heterotetramer with KCNB1. Heterotetramer with KCNB2. Expressed in brain and placenta, and at much lower levels in kidney and pancreas.

The protein localises to the cell membrane. Functionally, regulatory alpha-subunit of the voltage-gated potassium (Kv) channel which, when coassembled with KCNB1 or KCNB2, can modulate their expression and their gating kinetics by acting on deactivation upon repolarization and inactivation during maintained depolarization. Potassium channel subunit that does not form functional channels by itself. This chain is Voltage-gated potassium channel regulatory subunit KCNG1, found in Homo sapiens (Human).